A 556-amino-acid polypeptide reads, in one-letter code: RING finger protein 207 (556 aa).

The segment at 25–64 (CPLCHAQYERPCLLDCFHEFCAGCLRGRAADGRLACPLCQ) adopts an RING-type zinc-finger fold. The B box-type; atypical zinc finger occupies 93-145 (TEVVRCANCDLECGKQDAETTYFCNTCGQPLCARCRDETHRARMFARHDIVAL). Zn(2+) contacts are provided by Cys98, Cys101, Cys127, and His132. 2 coiled-coil regions span residues 218–273 (TREA…NKAE) and 385–425 (FTEH…SLIK). Residues 517 to 556 (FQVPVDEPSDHPQNTHDDGVNAEAPARVSTLKPAMEKEVS) form a disordered region. Positions 524-535 (PSDHPQNTHDDG) are enriched in basic and acidic residues.

Interacts with the core-glycosylated, but not the fully glycosylated form of KCNH2/HERG. Interacts with DNAJA1 and HSPA8. Interacts (via the C-terminus) with HSPA1A; this interaction additively increases KCNH2 expression.

The protein localises to the cytoplasm. In terms of biological role, plays a role in cardiac repolarization possibly by stabilizing membrane expression of the potassium channel KCNH2/HERG, or by assisting its synthesis, folding or export from the endoplasmic reticulum, in a heat shock protein-dependent manner. This is RING finger protein 207 (RNF207) from Bos taurus (Bovine).